The chain runs to 495 residues: Probable cytochrome P450 513C1 (495 aa).

Residues 1–21 form a helical membrane-spanning segment; sequence MNYLVLILVSLVSIYFLFIKN. Cys441 serves as a coordination point for heme.

Belongs to the cytochrome P450 family. Heme is required as a cofactor.

It is found in the membrane. The sequence is that of Probable cytochrome P450 513C1 (cyp513C1) from Dictyostelium discoideum (Social amoeba).